A 464-amino-acid polypeptide reads, in one-letter code: GDNF family receptor alpha-2 (464 aa).

Residues 1–21 (MILANAFCLFFFLDETLRSLA) form the signal peptide. 14 cysteine pairs are disulfide-bonded: C40/C93, C47/C53, C63/C78, C95/C105, C161/C222, C168/C174, C185/C200, C195/C241, C224/C229, C251/C323, C258/C264, C275/C293, C285/C347, and C325/C335. The N-linked (GlcNAc...) asparagine glycan is linked to N52. A glycan (N-linked (GlcNAc...) asparagine) is linked at N357. Residues 360 to 374 (DVNLSPKSPPFQATQ) show a composition bias toward polar residues. Residues 360 to 392 (DVNLSPKSPPFQATQAPRVDKTPSLPDDLSDST) form a disordered region. Positions 381 to 392 (TPSLPDDLSDST) are enriched in low complexity. N413 is a glycosylation site (N-linked (GlcNAc...) asparagine). The GPI-anchor amidated asparagine moiety is linked to residue N440. The propeptide at 441 to 464 (SGPRRTRPSAALTAASFLMLKLAL) is removed in mature form.

The protein belongs to the GDNFR family. As to quaternary structure, interacts with NRTN ligand and RET: forms a 2:2:2 ternary complex composed of NRTN ligand, GFRA2 and RET receptor. Also forms a 4:4:4 tetrameric complex composed of 4 copies of NRTN ligand, GFRA2 and RET receptor, which prevents endocytosis of RET. Interacts with SORL1.

Its subcellular location is the cell membrane. In terms of biological role, receptor for neurturin (NRTN), a growth factor that supports the survival of sympathetic neurons. NRTN-binding leads to autophosphorylation and activation of the RET receptor. Also able to mediate GDNF signaling through the RET tyrosine kinase receptor. This is GDNF family receptor alpha-2 (GFRA2) from Bos taurus (Bovine).